A 408-amino-acid chain; its full sequence is CinA-like protein (408 aa).

It belongs to the CinA family.

This Thermotoga sp. (strain RQ2) protein is CinA-like protein.